A 518-amino-acid polypeptide reads, in one-letter code: MDLAIVSSPTRDVVRCCDCGCDCSLNGASPGSLLRSVKRKYEEFENEKLFHIPELELDLSSNAKVQIENELELLRETVSSQQQSIQDLYEELDEERNAASTAASEAMSMILRLQRDKAELQMELRQFKRFAEEKMEHDQQELLDLEDLIYKREQTIQALTFEAQAYKHRMMSFGFTEAEVETEKNMLSRNPSMIENDYQYDLPTSDYPPIKCNVNENPGPLEADIDVDDVEKYPLADSPHPLKTLERRISQMERNPSFTQPTGDVSGGRHYTEKNVVGQSPRHQRHFRRVSTGSASSLLGTTREKRLDFSNDSPRSNNGSFRKMEDPPYAAGNSFARDKGDSSEIGDNDMNDRVYTIDSVHHSVSHSGTAEQKFKNDTADGYAMSPREISNQPDLGDPEISKLYMRLQALEADRESMRQAIMSMRTEKAQMVLLKEIAQHLSKDVVPERRLPLRKTSIIGAFNFISVFKWITSFVFWRRKARRSKYMNGVQGNNMGLQMLLEKTPRIRQWRCLSSTQV.

In terms of domain architecture, GTD-binding spans 69 to 167 (NELELLRETV…ALTFEAQAYK (99 aa)). Positions 276–350 (VVGQSPRHQR…DSSEIGDNDM (75 aa)) are disordered. Low complexity predominate over residues 291 to 301 (STGSASSLLGT). Over residues 310 to 320 (SNDSPRSNNGS) the composition is skewed to polar residues. Ser385 bears the Phosphoserine mark. Residues 399–431 (EISKLYMRLQALEADRESMRQAIMSMRTEKAQM) adopt a coiled-coil conformation. The chain crosses the membrane as a helical span at residues 458–477 (IIGAFNFISVFKWITSFVFW).

In terms of assembly, interacts with myosin XI-I.

The protein localises to the endomembrane system. Functionally, membrane-anchored myosin receptors that define a distinct, plant-specific transport vesicle compartment. The chain is Myosin-binding protein 7 from Arabidopsis thaliana (Mouse-ear cress).